An 84-amino-acid polypeptide reads, in one-letter code: MAHKKAGGSTRNGRDSESKRLGVKRFGGESVLAGNIIVRQRGTKFHAGVNVGIGRDHTLFALTDGKVKFEVKGPNNRKFISIEA.

The disordered stretch occupies residues 1 to 22; the sequence is MAHKKAGGSTRNGRDSESKRLG.

It belongs to the bacterial ribosomal protein bL27 family.

This chain is Large ribosomal subunit protein bL27, found in Shewanella oneidensis (strain ATCC 700550 / JCM 31522 / CIP 106686 / LMG 19005 / NCIMB 14063 / MR-1).